The sequence spans 86 residues: Colicin-E2 immunity protein (86 aa).

Belongs to the colicins ColE2/ColE8/ColE9 and pyocins S1/S2 family.

In terms of biological role, this protein is able to protect a cell, which harbors the plasmid ColE2 encoding colicin E2, against colicin E2. This chain is Colicin-E2 immunity protein (imm), found in Escherichia coli.